A 150-amino-acid polypeptide reads, in one-letter code: uncharacterized protein (150 aa).

The HTH asnC-type domain maps to 5–66 (LDRTDKMLLE…KPNYKKLNLG (62 aa)). A DNA-binding region (H-T-H motif) is located at residues 24 to 43 (IAALSKKLGIPRTTVHYRIK).

This is an uncharacterized protein from Pyrococcus furiosus (strain ATCC 43587 / DSM 3638 / JCM 8422 / Vc1).